A 247-amino-acid polypeptide reads, in one-letter code: OCIA domain-containing protein 1 (247 aa).

The 112-residue stretch at 1–112 (MNGRADFREP…KKLENSPLGE (112 aa)) folds into the OCIA domain. S108 and S116 each carry phosphoserine. The tract at residues 116-247 (SGELRRSLPP…VNKYGDTWDE (132 aa)) is disordered. Composition is skewed to polar residues over residues 136-146 (SNVSGQSSFGT) and 168-177 (ASMNESTPTG). 2 stretches are compositionally biased toward basic and acidic residues: residues 192–210 (DSPK…KNRE) and 218–240 (HKTD…KVNK). Residues S193 and S198 each carry the phosphoserine modification.

This sequence belongs to the OCIAD1 family. As to quaternary structure, interacts with OCIAD2. Interacts with STAT3.

The protein resides in the endosome. Functionally, maintains stem cell potency. Increases STAT3 phosphorylation and controls ERK phosphorylation. May act as a scaffold, increasing STAT3 recruitment onto endosomes. The polypeptide is OCIA domain-containing protein 1 (Rattus norvegicus (Rat)).